Consider the following 216-residue polypeptide: Ethylene-inducing xylanase (216 aa).

Residues 1–19 form the signal peptide; it reads MVSFSSLFVAACAAVTAFA. Residues 28–216 enclose the GH11 domain; that stretch reads AITTSQQGTS…SSGSSDITVS (189 aa). Glu112 functions as the Nucleophile in the catalytic mechanism. Glu203 functions as the Proton donor in the catalytic mechanism.

This sequence belongs to the glycosyl hydrolase 11 (cellulase G) family.

It localises to the secreted. It catalyses the reaction Endohydrolysis of (1-&gt;4)-beta-D-xylosidic linkages in xylans.. It participates in glycan degradation; xylan degradation. In terms of biological role, endo-1,4-beta-xylanase involved in the hydrolysis of xylan, a major structural heterogeneous polysaccharide found in plant biomass representing the second most abundant polysaccharide in the biosphere, after cellulose. Acts as a pathogen-associated molecular pattern (PAMP) that can trigger plant cell death. Triggers a series of immune responses in citrus fruit and enhanced the resistance of citrus and other fruit against fungal pathogens. This Penicillium digitatum (strain Pd1 / CECT 20795) (Green mold) protein is Ethylene-inducing xylanase.